The primary structure comprises 445 residues: Rab GDP dissociation inhibitor beta (445 aa).

Methionine 1 is subject to N-acetylmethionine. The residue at position 57 (lysine 57) is an N6-succinyllysine. An N6-acetyllysine modification is found at lysine 112. A Phosphoserine modification is found at serine 130. Lysine 269 carries the N6-acetyllysine modification. Serine 382 carries the post-translational modification Phosphoserine.

This sequence belongs to the Rab GDI family. As to quaternary structure, interacts with RHOH. Interacts with the GDP-bound inactive forms of RAB3A, RAB3B, RAB3C, RAB5A, RAB5B, RAB5C, RAB8A, RAB8B, RAB10, RAB12, RAB35, and RAB43; binds RAB3D to a lesser extent. Interacts with DZIP1; this interaction negatively regulates the interaction of GDI2 with GDP-bound RAB8A.

The protein resides in the cytoplasm. Its subcellular location is the membrane. The protein localises to the golgi apparatus. It localises to the trans-Golgi network. GDP-dissociation inhibitor preventing the GDP to GTP exchange of most Rab proteins. By keeping these small GTPases in their inactive GDP-bound form regulates intracellular membrane trafficking. Negatively regulates protein transport to the cilium and ciliogenesis through the inhibition of RAB8A. In Pongo abelii (Sumatran orangutan), this protein is Rab GDP dissociation inhibitor beta (GDI2).